A 365-amino-acid chain; its full sequence is Eukaryotic translation initiation factor 3 subunit H (365 aa).

The MPN domain occupies 11–160 (VQVEALVVMK…LRAFRLSPQF (150 aa)). Residues 273–303 (YQRSLAREQTKIAAWQAKRKAENATRAQLKQ) adopt a coiled-coil conformation.

Belongs to the eIF-3 subunit H family. In terms of assembly, component of the eukaryotic translation initiation factor 3 (eIF-3) complex.

It localises to the cytoplasm. In terms of biological role, component of the eukaryotic translation initiation factor 3 (eIF-3) complex, which is involved in protein synthesis of a specialized repertoire of mRNAs and, together with other initiation factors, stimulates binding of mRNA and methionyl-tRNAi to the 40S ribosome. The eIF-3 complex specifically targets and initiates translation of a subset of mRNAs involved in cell proliferation. The polypeptide is Eukaryotic translation initiation factor 3 subunit H (Coccidioides immitis (strain RS) (Valley fever fungus)).